A 363-amino-acid polypeptide reads, in one-letter code: Protein RecA (363 aa).

79-86 (GPESSGKT) provides a ligand contact to ATP.

This sequence belongs to the RecA family.

It localises to the cytoplasm. Can catalyze the hydrolysis of ATP in the presence of single-stranded DNA, the ATP-dependent uptake of single-stranded DNA by duplex DNA, and the ATP-dependent hybridization of homologous single-stranded DNAs. It interacts with LexA causing its activation and leading to its autocatalytic cleavage. In Methylobacterium sp. (strain 4-46), this protein is Protein RecA.